The chain runs to 61 residues: Putative defensin-like protein 72 (61 aa).

Disulfide bonds link C21–C59, C25–C48, C34–C57, and C38–C58.

It belongs to the DEFL family.

This Arabidopsis thaliana (Mouse-ear cress) protein is Putative defensin-like protein 72.